Reading from the N-terminus, the 198-residue chain is Dual specificity protein phosphatase 13B (198 aa).

Positions 45–193 (HINEVWPNLF…LQVLDNRLRR (149 aa)) constitute a Tyrosine-protein phosphatase domain. The active-site Phosphocysteine intermediate is Cys-138.

Belongs to the protein-tyrosine phosphatase family. Non-receptor class dual specificity subfamily. As to expression, most abundantly expressed in the testis.

The catalysed reaction is O-phospho-L-tyrosyl-[protein] + H2O = L-tyrosyl-[protein] + phosphate. The enzyme catalyses O-phospho-L-seryl-[protein] + H2O = L-seryl-[protein] + phosphate. It carries out the reaction O-phospho-L-threonyl-[protein] + H2O = L-threonyl-[protein] + phosphate. Its function is as follows. Dual specificity phosphatase that dephosphorylates MAPK8/JNK and MAPK14/p38, but not MAPK1/ERK2, in vitro. Exhibits intrinsic phosphatase activity towards both phospho-seryl/threonyl and -tyrosyl residues, with similar specific activities in vitro. This chain is Dual specificity protein phosphatase 13B, found in Mus musculus (Mouse).